A 157-amino-acid chain; its full sequence is Transcription elongation factor GreA (157 aa).

A coiled-coil region spans residues 1–75 (MSKEIILTQE…VETLINRAKV (75 aa)).

The protein belongs to the GreA/GreB family.

Functionally, necessary for efficient RNA polymerase transcription elongation past template-encoded arresting sites. The arresting sites in DNA have the property of trapping a certain fraction of elongating RNA polymerases that pass through, resulting in locked ternary complexes. Cleavage of the nascent transcript by cleavage factors such as GreA or GreB allows the resumption of elongation from the new 3'terminus. GreA releases sequences of 2 to 3 nucleotides. In Mycoplasma capricolum subsp. capricolum (strain California kid / ATCC 27343 / NCTC 10154), this protein is Transcription elongation factor GreA.